A 105-amino-acid chain; its full sequence is Nucleoid-associated protein MW0434 (105 aa).

The tract at residues 1-33 (MRGGGNMQQMMKQMQKMQKKMAQEQEKLKEERI) is disordered. Over residues 7-16 (MQQMMKQMQK) the composition is skewed to low complexity. Residues 21–33 (MAQEQEKLKEERI) are compositionally biased toward basic and acidic residues.

Belongs to the YbaB/EbfC family. Homodimer.

Its subcellular location is the cytoplasm. The protein localises to the nucleoid. In terms of biological role, binds to DNA and alters its conformation. May be involved in regulation of gene expression, nucleoid organization and DNA protection. The chain is Nucleoid-associated protein MW0434 from Staphylococcus aureus (strain MW2).